We begin with the raw amino-acid sequence, 303 residues long: Ribonucleoside-diphosphate reductase small subunit (303 aa).

Fe cation contacts are provided by aspartate 60, glutamate 90, and histidine 93. Tyrosine 97 is an active-site residue. A helical membrane pass occupies residues 147–167; it reads LLMILIEGIFFASSFASISYL. Fe cation-binding residues include glutamate 153, glutamate 187, and histidine 190.

The protein belongs to the ribonucleoside diphosphate reductase small chain family. Heterotetramer composed of a homodimer of the large subunit (R1) and a homodimer of the small subunit (R2). Larger multisubunit protein complex are also active, composed of (R1)n(R2)n. Fe cation serves as cofactor.

The protein localises to the host membrane. It catalyses the reaction a 2'-deoxyribonucleoside 5'-diphosphate + [thioredoxin]-disulfide + H2O = a ribonucleoside 5'-diphosphate + [thioredoxin]-dithiol. Ribonucleoside-diphosphate reductase holoenzyme provides the precursors necessary for viral DNA synthesis. Allows virus growth in non-dividing cells, as well as reactivation from latency in infected hosts. Catalyzes the biosynthesis of deoxyribonucleotides from the corresponding ribonucleotides. In Suid herpesvirus 1 (strain Kaplan) (SuHV-1), this protein is Ribonucleoside-diphosphate reductase small subunit.